We begin with the raw amino-acid sequence, 616 residues long: UPF0329 protein ECU02_1540 (616 aa).

Basic and acidic residues-rich tracts occupy residues 350-359 (EREKREESKG) and 369-381 (GAGE…KEED). Residues 350 to 427 (EREKREESKG…RKGDGHHYKI (78 aa)) form a disordered region. Residues 382-396 (GKEEEGVEAEEEESA) show a composition bias toward acidic residues. Over residues 408 to 427 (ARRKKSLKGKRKGDGHHYKI) the composition is skewed to basic residues.

Belongs to the UPF0329 family.

The protein is UPF0329 protein ECU02_1540 of Encephalitozoon cuniculi (strain GB-M1) (Microsporidian parasite).